The sequence spans 348 residues: MELQSSEIRNAQAHFFTQVFSFTSMSSLKCAVQLGIPDAIHSHGKPMALSDLTNSLPINPSKAPYIYRLMRILVAAGYFSEEEKNVYSLTPFTRLLLKNDPLNSISMVLGVNQIAELKAWNAMSEWFQNEDLTAFETAHGKNFWDFGAEDKYGKNFDGVMAADSILVSKMLIPEFNYLFEGLDSLVDVGGGTGTIAKAIAKSFPDLKCTVFDLPHVVANLESTENLEFVGGDMFEKIPSANAILLKWILHDWKDEECVKVLKMCRKAIPEKEKGGKVILIETVLMDSKKHENEEAVKAQISSDIDMMVFFTAKERTEEEWATLFREAGFSGYKIFPMIDFRSPIEVYP.

Met-1 carries the N-acetylmethionine modification. S-adenosyl-L-methionine-binding residues include Gly-189, Asp-212, Asp-232, Met-233, and Lys-246. His-250 acts as the Proton acceptor in catalysis.

In terms of processing, the N-terminus is blocked.

The catalysed reaction is S-adenosyl-L-methionine + a 3'-hydroxyflavonoid = S-adenosyl-L-homocysteine + a 3'-methoxyflavonoid.. The enzyme catalyses S-adenosyl-L-methionine + a 5'-hydroxy-3'-methoxyflavonoid = S-adenosyl-L-homocysteine + a 3',5'-dimethoxyflavonoid.. Methylates myricetin and dihydromyricetin at 2 sites. Inactive towards 16-hydroxytabersonine, the phenylpropanoids 5-hydroxyferulate, caffeate and their CoA-esters, flavones and flavanones possessing 2 or 3 B-ring hydroxyl groups. In Catharanthus roseus (Madagascar periwinkle), this protein is Myricetin O-methyltransferase.